Reading from the N-terminus, the 86-residue chain is MSTLDQTVHFDFRDNNPKNVHETLETVYKALEEKGYNPINQIVGYLISGDPAYIPRYNDARNLIRKHERDEIIEELVRNYLGKEQA.

Belongs to the UPF0297 family.

This Lacticaseibacillus casei (strain BL23) (Lactobacillus casei) protein is UPF0297 protein LCABL_08470.